A 691-amino-acid chain; its full sequence is Elongation factor G (691 aa).

The tr-type G domain maps to 6 to 281 (SRYRNIGIMA…GVVDFLPSPI (276 aa)). Residues 15-22 (AHIDAGKT), 79-83 (DTPGH), and 133-136 (NKMD) contribute to the GTP site.

The protein belongs to the TRAFAC class translation factor GTPase superfamily. Classic translation factor GTPase family. EF-G/EF-2 subfamily.

The protein resides in the cytoplasm. In terms of biological role, catalyzes the GTP-dependent ribosomal translocation step during translation elongation. During this step, the ribosome changes from the pre-translocational (PRE) to the post-translocational (POST) state as the newly formed A-site-bound peptidyl-tRNA and P-site-bound deacylated tRNA move to the P and E sites, respectively. Catalyzes the coordinated movement of the two tRNA molecules, the mRNA and conformational changes in the ribosome. This Wolbachia pipientis subsp. Culex pipiens (strain wPip) protein is Elongation factor G.